The chain runs to 451 residues: Molybdate-anion transporter (451 aa).

A run of 12 helical transmembrane segments spans residues 1-21 (MLVT…VLEF), 45-65 (YDFY…GPYL), 79-99 (IAII…VSVP), 130-150 (FVLM…FSCF), 180-200 (NGGI…WLGL), 201-221 (GPAS…VLVI), 251-271 (VLLL…FIFL), 281-301 (APLG…SSLY), 316-336 (VLCL…FSTA), 346-366 (LLAF…MRFL), 378-398 (GVLN…LLVL), and 410-430 (MFSL…SLFT).

This sequence belongs to the major facilitator superfamily.

It is found in the cell membrane. Mediates high-affinity intracellular uptake of the rare oligo-element molybdenum. This chain is Molybdate-anion transporter (mfsd5), found in Xenopus laevis (African clawed frog).